We begin with the raw amino-acid sequence, 306 residues long: Tyrosine--tRNA ligase (306 aa).

Tyr32 and Glu36 together coordinate L-tyrosine. Positions 37–45 (PSGKIHLGH) match the 'HIGH' region motif. Residues 151–158 (YPIMQVND) are tyrosine. Gln173 contacts L-tyrosine. Residues 204-208 (KMSSS) carry the 'KMSKS' region motif. Ser207 provides a ligand contact to ATP. Interaction with t-RNA stretches follow at residues 228-231 (KAYC) and 283-288 (HPMDLK).

Belongs to the class-I aminoacyl-tRNA synthetase family. TyrS type 3 subfamily. In terms of assembly, homodimer.

It localises to the cytoplasm. It carries out the reaction tRNA(Tyr) + L-tyrosine + ATP = L-tyrosyl-tRNA(Tyr) + AMP + diphosphate + H(+). Functionally, catalyzes the attachment of tyrosine to tRNA(Tyr) in a two-step reaction: tyrosine is first activated by ATP to form Tyr-AMP and then transferred to the acceptor end of tRNA(Tyr). The protein is Tyrosine--tRNA ligase (tyrS) of Methanocaldococcus jannaschii (strain ATCC 43067 / DSM 2661 / JAL-1 / JCM 10045 / NBRC 100440) (Methanococcus jannaschii).